Here is a 380-residue protein sequence, read N- to C-terminus: Proline iminopeptidase (380 aa).

Positions 98–360 (PVVFLHGGPG…IVYDAGHSAN (263 aa)) constitute an AB hydrolase-1 domain. The Nucleophile role is filled by Ser-172. Asp-329 is a catalytic residue. The active-site Proton donor is His-357.

It belongs to the peptidase S33 family.

The protein resides in the cytoplasm. It carries out the reaction Release of N-terminal proline from a peptide.. Specifically catalyzes the removal of N-terminal proline residues from peptides. This Arabidopsis thaliana (Mouse-ear cress) protein is Proline iminopeptidase (PIP).